The chain runs to 45 residues: Proteinase inhibitor IIA (45 aa).

3 cysteine pairs are disulfide-bonded: C10/C24, C14/C35, and C20/C43.

This sequence belongs to the protease inhibitor I20 (potato type II proteinase inhibitor) family.

It is found in the secreted. In terms of biological role, inhibits trypsin strongly and chymotrypsin temporarily. The chain is Proteinase inhibitor IIA from Solanum tuberosum (Potato).